The sequence spans 484 residues: tRNA sulfurtransferase (484 aa).

The 105-residue stretch at 63–167 (ANLILLLSST…NEKLFFIDKK (105 aa)) folds into the THUMP domain. Residues 185–186 (LI), Lys-267, Gly-289, and Gln-298 each bind ATP. A disulfide bond links Cys-346 and Cys-458. The region spanning 406-484 (FAENEIVLDI…GFDNVKVYRP (79 aa)) is the Rhodanese domain. Cys-458 serves as the catalytic Cysteine persulfide intermediate.

Belongs to the ThiI family.

The protein localises to the cytoplasm. The catalysed reaction is [ThiI sulfur-carrier protein]-S-sulfanyl-L-cysteine + a uridine in tRNA + 2 reduced [2Fe-2S]-[ferredoxin] + ATP + H(+) = [ThiI sulfur-carrier protein]-L-cysteine + a 4-thiouridine in tRNA + 2 oxidized [2Fe-2S]-[ferredoxin] + AMP + diphosphate. The enzyme catalyses [ThiS sulfur-carrier protein]-C-terminal Gly-Gly-AMP + S-sulfanyl-L-cysteinyl-[cysteine desulfurase] + AH2 = [ThiS sulfur-carrier protein]-C-terminal-Gly-aminoethanethioate + L-cysteinyl-[cysteine desulfurase] + A + AMP + 2 H(+). It participates in cofactor biosynthesis; thiamine diphosphate biosynthesis. In terms of biological role, catalyzes the ATP-dependent transfer of a sulfur to tRNA to produce 4-thiouridine in position 8 of tRNAs, which functions as a near-UV photosensor. Also catalyzes the transfer of sulfur to the sulfur carrier protein ThiS, forming ThiS-thiocarboxylate. This is a step in the synthesis of thiazole, in the thiamine biosynthesis pathway. The sulfur is donated as persulfide by IscS. This is tRNA sulfurtransferase from Psychromonas ingrahamii (strain DSM 17664 / CCUG 51855 / 37).